Consider the following 158-residue polypeptide: UPF0262 protein R00612 (158 aa).

Belongs to the UPF0262 family.

The chain is UPF0262 protein R00612 from Rhizobium meliloti (strain 1021) (Ensifer meliloti).